The sequence spans 296 residues: 4-hydroxybenzoate octaprenyltransferase (296 aa).

8 helical membrane passes run 28-48 (IGTL…SDGI), 51-71 (LAVL…GCVI), 102-122 (LLLT…LNHL), 143-163 (FFPI…PMAF), 174-194 (AWIL…VYAM), 212-232 (FGRY…LLMA), 233-253 (VLGA…IVLL), and 274-294 (FLAN…HTFF).

It belongs to the UbiA prenyltransferase family. Mg(2+) is required as a cofactor.

It is found in the cell inner membrane. The enzyme catalyses all-trans-octaprenyl diphosphate + 4-hydroxybenzoate = 4-hydroxy-3-(all-trans-octaprenyl)benzoate + diphosphate. The protein operates within cofactor biosynthesis; ubiquinone biosynthesis. Its function is as follows. Catalyzes the prenylation of para-hydroxybenzoate (PHB) with an all-trans polyprenyl group. Mediates the second step in the final reaction sequence of ubiquinone-8 (UQ-8) biosynthesis, which is the condensation of the polyisoprenoid side chain with PHB, generating the first membrane-bound Q intermediate 3-octaprenyl-4-hydroxybenzoate. This chain is 4-hydroxybenzoate octaprenyltransferase, found in Neisseria gonorrhoeae (strain NCCP11945).